A 215-amino-acid polypeptide reads, in one-letter code: NAD(P)H-hydrate epimerase (215 aa).

The 203-residue stretch at 10–212 (SRELDDKTIN…DIGIYRGNAF (203 aa)) folds into the YjeF N-terminal domain. (6S)-NADPHX is bound at residue 59–63 (NNGGD). K(+) is bound by residues asparagine 60 and aspartate 122. (6S)-NADPHX is bound by residues 126–132 (GSGLSRN) and aspartate 155. Serine 158 lines the K(+) pocket.

Belongs to the NnrE/AIBP family. The cofactor is K(+).

It carries out the reaction (6R)-NADHX = (6S)-NADHX. The enzyme catalyses (6R)-NADPHX = (6S)-NADPHX. In terms of biological role, catalyzes the epimerization of the S- and R-forms of NAD(P)HX, a damaged form of NAD(P)H that is a result of enzymatic or heat-dependent hydration. This is a prerequisite for the S-specific NAD(P)H-hydrate dehydratase to allow the repair of both epimers of NAD(P)HX. In Lentilactobacillus buchneri (strain NRRL B-30929) (Lactobacillus buchneri), this protein is NAD(P)H-hydrate epimerase.